An 891-amino-acid chain; its full sequence is Alanine--tRNA ligase (891 aa).

Zn(2+)-binding residues include His576, His580, Cys684, and His688.

This sequence belongs to the class-II aminoacyl-tRNA synthetase family. Zn(2+) serves as cofactor.

The protein resides in the cytoplasm. The enzyme catalyses tRNA(Ala) + L-alanine + ATP = L-alanyl-tRNA(Ala) + AMP + diphosphate. Catalyzes the attachment of alanine to tRNA(Ala) in a two-step reaction: alanine is first activated by ATP to form Ala-AMP and then transferred to the acceptor end of tRNA(Ala). Also edits incorrectly charged Ser-tRNA(Ala) and Gly-tRNA(Ala) via its editing domain. In Orientia tsutsugamushi (strain Boryong) (Rickettsia tsutsugamushi), this protein is Alanine--tRNA ligase.